A 132-amino-acid polypeptide reads, in one-letter code: uncharacterized protein (132 aa).

The next 3 helical transmembrane spans lie at 28 to 48 (LLRLISLCIPIIRPFSFLIYP), 59 to 79 (ILPSILPIIPFAISSSLLFSY), and 106 to 126 (LLVASFVYLPYRSPLPVVIEI).

It localises to the membrane. This is an uncharacterized protein from Schizosaccharomyces pombe (strain 972 / ATCC 24843) (Fission yeast).